Reading from the N-terminus, the 154-residue chain is Endoribonuclease YbeY (154 aa).

Residues H113, H117, and H123 each contribute to the Zn(2+) site.

It belongs to the endoribonuclease YbeY family. Requires Zn(2+) as cofactor.

Its subcellular location is the cytoplasm. Functionally, single strand-specific metallo-endoribonuclease involved in late-stage 70S ribosome quality control and in maturation of the 3' terminus of the 16S rRNA. This chain is Endoribonuclease YbeY, found in Aeromonas hydrophila subsp. hydrophila (strain ATCC 7966 / DSM 30187 / BCRC 13018 / CCUG 14551 / JCM 1027 / KCTC 2358 / NCIMB 9240 / NCTC 8049).